A 514-amino-acid chain; its full sequence is 3-octaprenyl-4-hydroxybenzoate carboxy-lyase (514 aa).

N177 serves as a coordination point for Mn(2+). Prenylated FMN-binding positions include 180–182, 194–196, and 199–200; these read IYR, RWL, and RG. A Mn(2+)-binding site is contributed by E243. D314 serves as the catalytic Proton donor.

Belongs to the UbiD family. As to quaternary structure, homohexamer. It depends on prenylated FMN as a cofactor. The cofactor is Mn(2+).

The protein localises to the cell membrane. The catalysed reaction is a 4-hydroxy-3-(all-trans-polyprenyl)benzoate + H(+) = a 2-(all-trans-polyprenyl)phenol + CO2. The protein operates within cofactor biosynthesis; ubiquinone biosynthesis. Its function is as follows. Catalyzes the decarboxylation of 3-octaprenyl-4-hydroxy benzoate to 2-octaprenylphenol, an intermediate step in ubiquinone biosynthesis. The polypeptide is 3-octaprenyl-4-hydroxybenzoate carboxy-lyase (Bordetella parapertussis (strain 12822 / ATCC BAA-587 / NCTC 13253)).